A 393-amino-acid chain; its full sequence is Flap endonuclease 1 (393 aa).

The N-domain stretch occupies residues 1-108 (MGILGLSKLL…SELQERRQRA (108 aa)). Residue Asp-34 participates in Mg(2+) binding. Arg-74 contributes to the DNA binding site. 5 residues coordinate Mg(2+): Asp-90, Glu-162, Glu-164, Asp-183, and Asp-185. The I-domain stretch occupies residues 126-257 (LMEKMSKRTV…QKAWEGIKKH (132 aa)). Glu-162 contributes to the DNA binding site. Residues Gly-235 and Asp-237 each coordinate DNA. Position 237 (Asp-237) interacts with Mg(2+). Residues 340-348 (TQGRLDQFF) are interaction with PCNA.

Belongs to the XPG/RAD2 endonuclease family. FEN1 subfamily. In terms of assembly, interacts with PCNA. Three molecules of FEN1 bind to one PCNA trimer with each molecule binding to one PCNA monomer. PCNA stimulates the nuclease activity without altering cleavage specificity. Mg(2+) serves as cofactor. In terms of processing, phosphorylated. Phosphorylation upon DNA damage induces relocalization to the nuclear plasma.

Its subcellular location is the nucleus. The protein localises to the nucleolus. The protein resides in the nucleoplasm. It is found in the mitochondrion. Its function is as follows. Structure-specific nuclease with 5'-flap endonuclease and 5'-3' exonuclease activities involved in DNA replication and repair. During DNA replication, cleaves the 5'-overhanging flap structure that is generated by displacement synthesis when DNA polymerase encounters the 5'-end of a downstream Okazaki fragment. It enters the flap from the 5'-end and then tracks to cleave the flap base, leaving a nick for ligation. Also involved in the long patch base excision repair (LP-BER) pathway, by cleaving within the apurinic/apyrimidinic (AP) site-terminated flap. Acts as a genome stabilization factor that prevents flaps from equilibrating into structures that lead to duplications and deletions. Also possesses 5'-3' exonuclease activity on nicked or gapped double-stranded DNA, and exhibits RNase H activity. Also involved in replication and repair of rDNA and in repairing mitochondrial DNA. The chain is Flap endonuclease 1 from Trypanosoma cruzi (strain CL Brener).